Consider the following 710-residue polypeptide: Polyribonucleotide nucleotidyltransferase (710 aa).

Aspartate 489 and aspartate 495 together coordinate Mg(2+). Residues 556 to 615 enclose the KH domain; that stretch reads PKIDTIKIDVDKIKVVIGKGGETIDKIIAETGVKIDIDDEGNVSIYSSDQAAIDRTKEII. The S1 motif domain maps to 625–693; the sequence is GEVYHAKVVR…EKGRVDASMK (69 aa). A disordered region spans residues 691–710; that stretch reads SMKALIPRPPKPEKKEEKHD. Basic and acidic residues predominate over residues 700-710; it reads PKPEKKEEKHD.

Belongs to the polyribonucleotide nucleotidyltransferase family. Requires Mg(2+) as cofactor.

The protein resides in the cytoplasm. The enzyme catalyses RNA(n+1) + phosphate = RNA(n) + a ribonucleoside 5'-diphosphate. Its function is as follows. Involved in mRNA degradation. Catalyzes the phosphorolysis of single-stranded polyribonucleotides processively in the 3'- to 5'-direction. This Streptococcus pyogenes serotype M1 protein is Polyribonucleotide nucleotidyltransferase.